A 147-amino-acid chain; its full sequence is Helix-loop-helix protein 13 (147 aa).

Residues 41-93 form the bHLH domain; that stretch reads EERQTASIRERKRMCSINVAFIELRNYIPTFPYEKRLSKIDTLNLAIAYINML.

In terms of tissue distribution, expressed in hermaphrodite dopaminergic neurons (ADE, CEP, and PDE).

Its subcellular location is the nucleus. It is found in the cytoplasm. Transcriptional activator. Shown to have a role in the negative regulation of exit from L1 arrest and dauer diapause dependent on IIS signaling (insulin and insulin-like growth factor (IGF) signaling). Hypodermal expression is regulated by IIS/daf-16 while neuronal expression is not under the control of IIS/daf-16. The protein is Helix-loop-helix protein 13 of Caenorhabditis elegans.